Consider the following 392-residue polypeptide: Large ribosomal subunit protein uL3 (392 aa).

The protein belongs to the universal ribosomal protein uL3 family.

It is found in the cytoplasm. Its function is as follows. The L3 protein is a component of the large subunit of cytoplasmic ribosomes. This Aspergillus fumigatus (strain ATCC MYA-4609 / CBS 101355 / FGSC A1100 / Af293) (Neosartorya fumigata) protein is Large ribosomal subunit protein uL3 (rpl3).